We begin with the raw amino-acid sequence, 420 residues long: Vasopressin V1a receptor (420 aa).

The disordered stretch occupies residues 1 to 45 (MSFPRGSYDPAASNSSPRWPLSAEDANSSREAAGHQKGSDPSGDV). Residues 1 to 54 (MSFPRGSYDPAASNSSPRWPLSAEDANSSREAAGHQKGSDPSGDVRNEELAKLE) lie on the Extracellular side of the membrane. N-linked (GlcNAc...) asparagine glycosylation occurs at Asn-27. A compositionally biased stretch (basic and acidic residues) spans 32–45 (AAGHQKGSDPSGDV). The helical transmembrane segment at 55–75 (IAVLAVIFVVAVLGNSSVLLA) threads the bilayer. Residues 76–92 (LHRTPRKTSRMHLFIRH) are Cytoplasmic-facing. A helical membrane pass occupies residues 93–113 (LSLADLAVAFFQVLPQLCWDI). The Extracellular segment spans residues 114 to 125 (TYRFRGPDWLCR). Cys-124 and Cys-205 are joined by a disulfide. A helical membrane pass occupies residues 126-146 (VVKHLQVFAMFASAYMLVVMT). The Cytoplasmic segment spans residues 147-168 (ADRYIAVCHPLKTLQQPARRSR). Residues 169 to 189 (LMIAASWVLSFLLSTPQYFIF) form a helical membrane-spanning segment. Over 190–225 (SMIEIEVNNGTKTQDCWATFIQPWGTRAYVTWMTSG) the chain is Extracellular. An N-linked (GlcNAc...) asparagine glycan is attached at Asn-198. A helical membrane pass occupies residues 226 to 246 (VFVVPVVILGTCYGFICYHIW). At 247 to 294 (RNVRGKTASRQSKGSGEDVAPFHKGLLVTPCVSSVKTISRAKIRTVKM) the chain is on the cytoplasmic side. A helical membrane pass occupies residues 295-315 (TFVIVTAYILCWAPFFIVQMW). The Extracellular portion of the chain corresponds to 316 to 331 (SVWDDNFIWTDSENPS). Residues 332-352 (ITITALLASLNSCCNPWIYMF) form a helical membrane-spanning segment. Residues 353-420 (FSGHLLQDCV…RSIRFIPVST (68 aa)) are Cytoplasmic-facing. 2 S-palmitoyl cysteine lipidation sites follow: Cys-367 and Cys-368. The disordered stretch occupies residues 379 to 411 (DSDNMSRRQTSYSNNRSPTNSTGTWKDSPKSSR). Residues 385–403 (RRQTSYSNNRSPTNSTGTW) show a composition bias toward polar residues. Ser-406 carries the phosphoserine modification.

Belongs to the G-protein coupled receptor 1 family. Vasopressin/oxytocin receptor subfamily.

It is found in the cell membrane. In terms of biological role, receptor for arginine vasopressin. The activity of this receptor is mediated by G proteins which activate a phosphatidyl-inositol-calcium second messenger system. Involved in social memory formation. In Microtus montanus (Montane vole), this protein is Vasopressin V1a receptor (Avpr1a).